We begin with the raw amino-acid sequence, 344 residues long: tRNA N6-adenosine threonylcarbamoyltransferase (344 aa).

Histidine 119 and histidine 123 together coordinate Fe cation. Residues 141 to 145 (VVSGG), aspartate 174, glycine 187, aspartate 191, and asparagine 280 contribute to the substrate site. Fe cation is bound at residue aspartate 310.

Belongs to the KAE1 / TsaD family. Fe(2+) serves as cofactor.

The protein localises to the cytoplasm. It catalyses the reaction L-threonylcarbamoyladenylate + adenosine(37) in tRNA = N(6)-L-threonylcarbamoyladenosine(37) in tRNA + AMP + H(+). In terms of biological role, required for the formation of a threonylcarbamoyl group on adenosine at position 37 (t(6)A37) in tRNAs that read codons beginning with adenine. Is involved in the transfer of the threonylcarbamoyl moiety of threonylcarbamoyl-AMP (TC-AMP) to the N6 group of A37, together with TsaE and TsaB. TsaD likely plays a direct catalytic role in this reaction. This chain is tRNA N6-adenosine threonylcarbamoyltransferase, found in Listeria monocytogenes serotype 4b (strain CLIP80459).